Reading from the N-terminus, the 150-residue chain is Arginine repressor (150 aa).

This sequence belongs to the ArgR family.

Its subcellular location is the cytoplasm. It participates in amino-acid biosynthesis; L-arginine biosynthesis [regulation]. Its function is as follows. Regulates arginine biosynthesis genes. In Clostridium botulinum (strain Okra / Type B1), this protein is Arginine repressor.